Reading from the N-terminus, the 293-residue chain is Shikimate kinase (293 aa).

87 to 97 (PLAGGLKSSSA) lines the ATP pocket.

Belongs to the GHMP kinase family. Archaeal shikimate kinase subfamily.

Its subcellular location is the cytoplasm. The enzyme catalyses shikimate + ATP = 3-phosphoshikimate + ADP + H(+). It participates in metabolic intermediate biosynthesis; chorismate biosynthesis; chorismate from D-erythrose 4-phosphate and phosphoenolpyruvate: step 5/7. This chain is Shikimate kinase, found in Methanosarcina mazei (strain ATCC BAA-159 / DSM 3647 / Goe1 / Go1 / JCM 11833 / OCM 88) (Methanosarcina frisia).